Here is a 172-residue protein sequence, read N- to C-terminus: Large ribosomal subunit protein uL10 (172 aa).

Belongs to the universal ribosomal protein uL10 family. As to quaternary structure, part of the ribosomal stalk of the 50S ribosomal subunit. The N-terminus interacts with L11 and the large rRNA to form the base of the stalk. The C-terminus forms an elongated spine to which L12 dimers bind in a sequential fashion forming a multimeric L10(L12)X complex.

In terms of biological role, forms part of the ribosomal stalk, playing a central role in the interaction of the ribosome with GTP-bound translation factors. The protein is Large ribosomal subunit protein uL10 of Rhizobium meliloti (strain 1021) (Ensifer meliloti).